We begin with the raw amino-acid sequence, 35 residues long: Photosystem II reaction center protein Psb30 (35 aa).

The helical transmembrane segment at 7–27 (LIANFAALALITLAGPAVIFI) threads the bilayer.

Belongs to the Psb30/Ycf12 family. PSII is composed of 1 copy each of membrane proteins PsbA, PsbB, PsbC, PsbD, PsbE, PsbF, PsbH, PsbI, PsbJ, PsbK, PsbL, PsbM, PsbT, PsbX, PsbY, PsbZ, Psb30/Ycf12, peripheral proteins of the oxygen-evolving complex and a large number of cofactors. It forms dimeric complexes.

It localises to the plastid. The protein resides in the organellar chromatophore thylakoid membrane. A core subunit of photosystem II (PSII), probably helps stabilize the reaction center. This Paulinella chromatophora protein is Photosystem II reaction center protein Psb30.